The primary structure comprises 162 residues: uncharacterized protein (162 aa).

Transmembrane regions (helical) follow at residues 15–35, 43–63, 70–90, and 97–117; these read VLAIFIVLLIISAYLGFAPAL, VCHFFVFFLLTLVFYWVFDLS, LTILVCGVFGGLGSEFVQSFL, and LFDIVANLLGCSLALLLNILY.

It localises to the membrane. This is an uncharacterized protein from Schizosaccharomyces pombe (strain 972 / ATCC 24843) (Fission yeast).